The following is a 340-amino-acid chain: Biotin synthase (340 aa).

A disordered region spans residues 1-21 (MDAASVSFGSGHDLSSQPRHD). Positions 53-272 (NHVETANLLS…IAVARIMMPR (220 aa)) constitute a Radical SAM core domain. Positions 68, 72, and 75 each coordinate [4Fe-4S] cluster. The [2Fe-2S] cluster site is built by cysteine 112, cysteine 143, cysteine 203, and arginine 276.

Belongs to the radical SAM superfamily. Biotin synthase family. In terms of assembly, homodimer. Requires [4Fe-4S] cluster as cofactor. [2Fe-2S] cluster is required as a cofactor.

It carries out the reaction (4R,5S)-dethiobiotin + (sulfur carrier)-SH + 2 reduced [2Fe-2S]-[ferredoxin] + 2 S-adenosyl-L-methionine = (sulfur carrier)-H + biotin + 2 5'-deoxyadenosine + 2 L-methionine + 2 oxidized [2Fe-2S]-[ferredoxin]. It participates in cofactor biosynthesis; biotin biosynthesis; biotin from 7,8-diaminononanoate: step 2/2. Its function is as follows. Catalyzes the conversion of dethiobiotin (DTB) to biotin by the insertion of a sulfur atom into dethiobiotin via a radical-based mechanism. The chain is Biotin synthase from Nitrobacter hamburgensis (strain DSM 10229 / NCIMB 13809 / X14).